The chain runs to 420 residues: UDP-N-acetylglucosamine 1-carboxyvinyltransferase (420 aa).

22–23 is a binding site for phosphoenolpyruvate; the sequence is KN. Arginine 92 is a UDP-N-acetyl-alpha-D-glucosamine binding site. The Proton donor role is filled by cysteine 116. At cysteine 116 the chain carries 2-(S-cysteinyl)pyruvic acid O-phosphothioketal. UDP-N-acetyl-alpha-D-glucosamine-binding positions include 121–125, 161–164, aspartate 306, and isoleucine 328; these read RPVDL and KVSV.

The protein belongs to the EPSP synthase family. MurA subfamily.

It is found in the cytoplasm. It carries out the reaction phosphoenolpyruvate + UDP-N-acetyl-alpha-D-glucosamine = UDP-N-acetyl-3-O-(1-carboxyvinyl)-alpha-D-glucosamine + phosphate. The protein operates within cell wall biogenesis; peptidoglycan biosynthesis. In terms of biological role, cell wall formation. Adds enolpyruvyl to UDP-N-acetylglucosamine. The chain is UDP-N-acetylglucosamine 1-carboxyvinyltransferase from Yersinia pseudotuberculosis serotype O:1b (strain IP 31758).